Reading from the N-terminus, the 213-residue chain is Probable nicotinate-nucleotide adenylyltransferase (213 aa).

This sequence belongs to the NadD family.

It catalyses the reaction nicotinate beta-D-ribonucleotide + ATP + H(+) = deamido-NAD(+) + diphosphate. It participates in cofactor biosynthesis; NAD(+) biosynthesis; deamido-NAD(+) from nicotinate D-ribonucleotide: step 1/1. Catalyzes the reversible adenylation of nicotinate mononucleotide (NaMN) to nicotinic acid adenine dinucleotide (NaAD). This Pectobacterium atrosepticum (strain SCRI 1043 / ATCC BAA-672) (Erwinia carotovora subsp. atroseptica) protein is Probable nicotinate-nucleotide adenylyltransferase.